The primary structure comprises 316 residues: Olfactory receptor 2G6 (316 aa).

At 1–25 the chain is on the extracellular side; that stretch reads MEETNNSSEKGFLLLGFSDQPQLER. Residues Asn5 and Asn6 are each glycosylated (N-linked (GlcNAc...) asparagine). A helical membrane pass occupies residues 26 to 49; the sequence is FLFAIILYFYVLSLLGNTALILVC. Residues 50-57 are Cytoplasmic-facing; that stretch reads CLDSRLHT. Residues 58-79 form a helical membrane-spanning segment; the sequence is PMYFFLSNLSCVDICFTTSVAP. Topologically, residues 80–100 are extracellular; the sequence is QLLVTMNKKDKTMSYGGCVAQ. Cysteines 97 and 189 form a disulfide. A helical membrane pass occupies residues 101–120; that stretch reads LYVAMGLGSSECILLAVMAY. Residues 121–139 lie on the Cytoplasmic side of the membrane; that stretch reads DRYAAVCRPLRYIAIMHPR. A helical transmembrane segment spans residues 140-158; that stretch reads FCASLAGGAWLSGLITSLI. Topologically, residues 159 to 195 are extracellular; it reads QCSLTVQLPLCGHRTLDHIFCEVPVLIKLACVDTTFN. A helical transmembrane segment spans residues 196–219; that stretch reads EAELFVASVVFLIVPVLLILVSYG. The Cytoplasmic portion of the chain corresponds to 220–236; the sequence is FITQAVLRIKSAAGRQK. A helical membrane pass occupies residues 237–259; sequence AFGTCSSHLVVVIIFYGTIIFMY. The Extracellular segment spans residues 260–272; sequence LQPANRRSKNQGK. Residues 273–292 traverse the membrane as a helical segment; the sequence is FVSLFYTIVTPLLNPIIYTL. Over 293-316 the chain is Cytoplasmic; sequence RNKDVKGALRTLILGSAAGQSHKD.

It belongs to the G-protein coupled receptor 1 family.

It localises to the cell membrane. Its function is as follows. Odorant receptor. This chain is Olfactory receptor 2G6 (OR2G6), found in Homo sapiens (Human).